The sequence spans 674 residues: Putative kinase-like protein TMKL1 (674 aa).

A signal peptide spans 1–25 (MGMEALRFLHVIFFFVLILHCHCGT). Residues 26–295 (SLSGSSDVKL…PLKPCLGSSR (270 aa)) are Extracellular-facing. Residues N57, N90, N95, and N110 are each glycosylated (N-linked (GlcNAc...) asparagine). 4 LRR repeats span residues 100–122 (HLLS…IGEF), 124–146 (MLQS…LGYT), 148–169 (SLSD…SIWN), and 173–194 (KLVS…PALP). N-linked (GlcNAc...) asparagine glycans are attached at residues N183 and N195. 3 LRR repeats span residues 200 to 222 (NLQV…ITRF), 224 to 244 (GVKS…EGLG), and 247 to 269 (ELES…GESK). Residues N252 and N257 are each glycosylated (N-linked (GlcNAc...) asparagine). A helical membrane pass occupies residues 296–323 (LSPGAVAGLVIGLMSGAVVVASLLIGYL). Topologically, residues 324-674 (QNKKRKSSIE…ETRSDAETPF (351 aa)) are cytoplasmic. Residues 331-350 (SIESEDDLEEGDEEDEIGEK) form a disordered region. Residues 333–348 (ESEDDLEEGDEEDEIG) are compositionally biased toward acidic residues. S334 carries the phosphoserine modification. The Protein kinase domain maps to 373–674 (NATGQVMEKT…ETRSDAETPF (302 aa)). T375 is modified (phosphothreonine). At S454 the chain carries Phosphoserine. Residues 649–674 (LEENRPRNRSALYSPTETRSDAETPF) are disordered.

It belongs to the protein kinase superfamily.

The protein resides in the membrane. Functionally, does not seem to have conserved a kinase activity. The polypeptide is Putative kinase-like protein TMKL1 (TMKL1) (Arabidopsis thaliana (Mouse-ear cress)).